We begin with the raw amino-acid sequence, 121 residues long: Large ribosomal subunit protein uL22c (121 aa).

Belongs to the universal ribosomal protein uL22 family. Part of the 50S ribosomal subunit.

The protein localises to the plastid. Its subcellular location is the chloroplast. Its function is as follows. This protein binds specifically to 23S rRNA. In terms of biological role, the globular domain of the protein is located near the polypeptide exit tunnel on the outside of the subunit, while an extended beta-hairpin is found that lines the wall of the exit tunnel in the center of the 70S ribosome. The sequence is that of Large ribosomal subunit protein uL22c (rpl22) from Guillardia theta (Cryptophyte).